A 653-amino-acid polypeptide reads, in one-letter code: MSARLRVADVRAELQRRGLDVSGTKPALVRRLDAAICEAEKAVVAAAPTSVANGYDVAVDGKRNCGNNKRKRSGDGGEEGNGDTCTDVTKLEGMSYRELQGLAKARGVAANGGKKDVIQRLLSATAGPAAVADGGPLGAKEVIKGGDEEVEVKKEKMVTATKKGAAVLDQHIPDHIKVNYHVLQVGDEIYDATLNQTNVGDNNNKFYIIQVLESDAGGSFMVYNRWGRVGVRGQDKLHGPSPTRDQAIYEFEGKFHNKTNNHWSDRKNFKCYAKKYTWLEMDYGETEKEIEKGSITDQIKETKLETRIAQFISLICNISMMKQRMVEIGYNAEKLPLGKLRKATILKGYHVLKRISDVISKADRRHLEQLTGEFYTVIPHDFGFRKMREFIIDTPQKLKAKLEMVEALGEIEIATKLLEDDSSDQDDPLYARYKQLHCDFTPLEADSDEYSMIKSYLRNTHGKTHSGYTVDIVQIFKVSRHGETERFQKFASTRNRMLLWHGSRLSNWAGILSQGLRIAPPEAPVTGYMFGKGVYFADMFSKSANYCYASEACRSGVLLLCEVALGDMNELLNADYDANNLPKGKLRSKGVGQTAPNMVESKVADDGVVVPLGEPKQEPSKRGGLLYNEYIVYNVDQIRMRYVLHVNFNFKRR.

One can recognise an SAP 1 domain in the interval 2–36; the sequence is SARLRVADVRAELQRRGLDVSGTKPALVRRLDAAI. The segment at 64-84 is disordered; the sequence is NCGNNKRKRSGDGGEEGNGDT. Positions 69 to 72 match the Nuclear localization signal motif; it reads KRKR. The SAP 2 domain occupies 91 to 125; it reads LEGMSYRELQGLAKARGVAANGGKKDVIQRLLSAT. The 98-residue stretch at 179 to 276 folds into the WGR domain; the sequence is NYHVLQVGDE…KNFKCYAKKY (98 aa). Residues 301–419 form the PARP alpha-helical domain; sequence ETKLETRIAQ…EIEIATKLLE (119 aa). One can recognise a PARP catalytic domain in the interval 427–653; sequence DPLYARYKQL…LHVNFNFKRR (227 aa).

This sequence belongs to the ARTD/PARP family.

The protein localises to the nucleus. The catalysed reaction is NAD(+) + (ADP-D-ribosyl)n-acceptor = nicotinamide + (ADP-D-ribosyl)n+1-acceptor + H(+).. It catalyses the reaction L-aspartyl-[protein] + NAD(+) = 4-O-(ADP-D-ribosyl)-L-aspartyl-[protein] + nicotinamide. It carries out the reaction L-glutamyl-[protein] + NAD(+) = 5-O-(ADP-D-ribosyl)-L-glutamyl-[protein] + nicotinamide. Functionally, involved in the base excision repair (BER) pathway, by catalyzing the poly(ADP-ribosyl)ation of a limited number of acceptor proteins involved in chromatin architecture and in DNA metabolism. This modification follows DNA damages and appears as an obligatory step in a detection/signaling pathway leading to the reparation of DNA strand breaks. The protein is Poly [ADP-ribose] polymerase 2 (PARP2) of Zea mays (Maize).